A 455-amino-acid chain; its full sequence is Immunoglobulin alpha-2 heavy chain (455 aa).

Ig-like domains are found at residues 1-95 (EVQL…VYYC), 121-213 (PKVF…QDVT), 227-322 (PRLS…ANIT), and 330-432 (PEVH…KTID). Residues 1 to 115 (EVQLVETGGG…GKGTTVTVSS (115 aa)) form a variable (V) domain, involved in antigen recognition region. 2 cysteine pairs are disulfide-bonded: Cys22/Cys95 and Cys141/Cys200. The constant (C) domain stretch occupies residues 116 to 455 (ASPTSPKVFP…VMAEADGTCY (340 aa)). N-linked (GlcNAc...) asparagine glycans are attached at residues Asn162, Asn207, and Asn246. 2 disulfide bridges follow: Cys225-Cys282 and Cys249-Cys306. The N-linked (GlcNAc...) asparagine glycan is linked to Asn320. A disulfide bond links Cys352 and Cys415. A glycan (N-linked (GlcNAc...) asparagine) is linked at Asn442.

Immunoglobulins are composed of two identical heavy chains and two identical light chains; disulfide-linked. Monomeric or polymeric.

It localises to the secreted. It is found in the cell membrane. Functionally, immunoglobulins, also known as antibodies, are membrane-bound or secreted glycoproteins produced by B lymphocytes. In the recognition phase of humoral immunity, the membrane-bound immunoglobulins serve as receptors which, upon binding of a specific antigen, trigger the clonal expansion and differentiation of B lymphocytes into immunoglobulins-secreting plasma cells. Secreted immunoglobulins mediate the effector phase of humoral immunity, which results in the elimination of bound antigens. The antigen binding site is formed by the variable domain of one heavy chain, together with that of its associated light chain. Thus, each immunoglobulin has two antigen binding sites with remarkable affinity for a particular antigen. The variable domains are assembled by a process called V-(D)-J rearrangement and can then be subjected to somatic hypermutations which, after exposure to antigen and selection, allow affinity maturation for a particular antigen. Ig alpha is the major immunoglobulin class in body secretions. This Homo sapiens (Human) protein is Immunoglobulin alpha-2 heavy chain.